Reading from the N-terminus, the 238-residue chain is uncharacterized protein (238 aa).

Belongs to the helicase family. Yeast subtelomeric Y' repeat subfamily.

This is an uncharacterized protein from Saccharomyces cerevisiae (strain ATCC 204508 / S288c) (Baker's yeast).